The primary structure comprises 254 residues: Phosphoribosylaminoimidazole-succinocarboxamide synthase (254 aa).

Belongs to the SAICAR synthetase family.

It carries out the reaction 5-amino-1-(5-phospho-D-ribosyl)imidazole-4-carboxylate + L-aspartate + ATP = (2S)-2-[5-amino-1-(5-phospho-beta-D-ribosyl)imidazole-4-carboxamido]succinate + ADP + phosphate + 2 H(+). The protein operates within purine metabolism; IMP biosynthesis via de novo pathway; 5-amino-1-(5-phospho-D-ribosyl)imidazole-4-carboxamide from 5-amino-1-(5-phospho-D-ribosyl)imidazole-4-carboxylate: step 1/2. The polypeptide is Phosphoribosylaminoimidazole-succinocarboxamide synthase (Acidiphilium cryptum (strain JF-5)).